Consider the following 638-residue polypeptide: Bromodomain-containing factor 2 (638 aa).

Basic and acidic residues predominate over residues 1–10 (MSRTNMDTRH). Residues 1–54 (MSRTNMDTRHAHSALLAAPQSATANSRSSNSSSESSSNKNNINVGVGDDSGNVS) form a disordered region. Low complexity predominate over residues 25–43 (NSRSSNSSSESSSNKNNIN). The 110-residue stretch at 130-239 (EAEELPPHQS…KYFEKKLSAM (110 aa)) folds into the Bromo 1 domain. The disordered stretch occupies residues 250–306 (KKTSRNRKKNEDMDSPLVIRRSVSTTNDNIGESGNREGVSGGRPKRTIHPPKSKDLF). The residue at position 264 (Ser264) is a Phosphoserine. Over residues 271–281 (SVSTTNDNIGE) the composition is skewed to polar residues. A Bromo 2 domain is found at 317-426 (KTLQKKFRTC…ELFNFHWLEN (110 aa)). A disordered region spans residues 435 to 460 (TDSDLEEDNYSSSYSSDDEYDDEDIN). Acidic residues predominate over residues 450–460 (SDDEYDDEDIN). The stretch at 468–537 (AIQYLEQKLK…INELSDLEMN (70 aa)) forms a coiled coil. The NET domain maps to 506-590 (TLLRRKAMKH…EKKNNNNSKR (85 aa)). The interval 586 to 638 (NNSKRKLSGNYSTAPTNKKKKTLKFLEKDEIINNNNYSDSEEDSSDSSDSDSD) is disordered. Positions 624–638 (DSEEDSSDSSDSDSD) are enriched in acidic residues.

The protein belongs to the BET family. Interacts with the TFIID subunit TAF7 and with histone H4. Post-translationally, phosphorylated by the casein kinase CK2 complex.

It localises to the cytoplasm. The protein resides in the nucleus. Transcription factor involved in the expression of a broad class of genes including snRNAs. Required for sporulation and DNA-damage repair. Prevents the spreading of SIR silencing at telomeres and protects histone H4, but not H3, from deacetylation. The chain is Bromodomain-containing factor 2 (BDF2) from Saccharomyces cerevisiae (strain ATCC 204508 / S288c) (Baker's yeast).